A 179-amino-acid chain; its full sequence is ATP-dependent protease subunit HslV (179 aa).

Thr-8 is a catalytic residue. Na(+) is bound by residues Ser-164, Cys-167, and Thr-170.

It belongs to the peptidase T1B family. HslV subfamily. In terms of assembly, a double ring-shaped homohexamer of HslV is capped on each side by a ring-shaped HslU homohexamer. The assembly of the HslU/HslV complex is dependent on binding of ATP.

It is found in the cytoplasm. The catalysed reaction is ATP-dependent cleavage of peptide bonds with broad specificity.. With respect to regulation, allosterically activated by HslU binding. Protease subunit of a proteasome-like degradation complex believed to be a general protein degrading machinery. This Staphylococcus carnosus (strain TM300) protein is ATP-dependent protease subunit HslV.